The following is a 191-amino-acid chain: Signal peptidase IB (191 aa).

The Cytoplasmic portion of the chain corresponds to 1–7 (MKKELLE). A helical transmembrane segment spans residues 8–28 (WIISIAVAFVILFIVGKFIVT). The Extracellular segment spans residues 29 to 191 (PYTIKGESMD…HNFNPENTKN (163 aa)). Residues Ser-36 and Lys-77 contribute to the active site.

This sequence belongs to the peptidase S26 family.

The protein localises to the cell membrane. The catalysed reaction is Cleavage of hydrophobic, N-terminal signal or leader sequences from secreted and periplasmic proteins.. Essential for cell viability. In Staphylococcus aureus (strain Mu50 / ATCC 700699), this protein is Signal peptidase IB (spsB).